A 394-amino-acid chain; its full sequence is Carbamoyl phosphate synthase small chain (394 aa).

The CPSase stretch occupies residues 1 to 188; it reads MIRKERAILA…PLPYAFPTLR (188 aa). L-glutamine contacts are provided by Ser-49, Gly-240, and Gly-242. The Glutamine amidotransferase type-1 domain occupies 192–379; that stretch reads RVVLMDFGIK…IEEIDAFEGA (188 aa). Cys-267 (nucleophile) is an active-site residue. The L-glutamine site is built by Leu-268, Gln-271, Asn-309, Gly-311, and Tyr-312. Catalysis depends on residues His-352 and Glu-354.

This sequence belongs to the CarA family. Composed of two chains; the small (or glutamine) chain promotes the hydrolysis of glutamine to ammonia, which is used by the large (or ammonia) chain to synthesize carbamoyl phosphate. Tetramer of heterodimers (alpha,beta)4.

The catalysed reaction is hydrogencarbonate + L-glutamine + 2 ATP + H2O = carbamoyl phosphate + L-glutamate + 2 ADP + phosphate + 2 H(+). It carries out the reaction L-glutamine + H2O = L-glutamate + NH4(+). Its pathway is amino-acid biosynthesis; L-arginine biosynthesis; carbamoyl phosphate from bicarbonate: step 1/1. It participates in pyrimidine metabolism; UMP biosynthesis via de novo pathway; (S)-dihydroorotate from bicarbonate: step 1/3. In terms of biological role, small subunit of the glutamine-dependent carbamoyl phosphate synthetase (CPSase). CPSase catalyzes the formation of carbamoyl phosphate from the ammonia moiety of glutamine, carbonate, and phosphate donated by ATP, constituting the first step of 2 biosynthetic pathways, one leading to arginine and/or urea and the other to pyrimidine nucleotides. The small subunit (glutamine amidotransferase) binds and cleaves glutamine to supply the large subunit with the substrate ammonia. This chain is Carbamoyl phosphate synthase small chain, found in Deinococcus geothermalis (strain DSM 11300 / CIP 105573 / AG-3a).